Consider the following 107-residue polypeptide: NADH-quinone oxidoreductase subunit K (107 aa).

A run of 3 helical transmembrane segments spans residues 11 to 31 (LTHYLVLAALLFVMGMAGVLL), 36 to 56 (IVLLMSIELMLNSVNLTFVAF), and 67 to 87 (IMVFFVMTIAAAEAAVGLALA).

It belongs to the complex I subunit 4L family. As to quaternary structure, NDH-1 is composed of 14 different subunits. Subunits NuoA, H, J, K, L, M, N constitute the membrane sector of the complex.

The protein localises to the cell inner membrane. It carries out the reaction a quinone + NADH + 5 H(+)(in) = a quinol + NAD(+) + 4 H(+)(out). In terms of biological role, NDH-1 shuttles electrons from NADH, via FMN and iron-sulfur (Fe-S) centers, to quinones in the respiratory chain. The immediate electron acceptor for the enzyme in this species is believed to be ubiquinone. Couples the redox reaction to proton translocation (for every two electrons transferred, four hydrogen ions are translocated across the cytoplasmic membrane), and thus conserves the redox energy in a proton gradient. The sequence is that of NADH-quinone oxidoreductase subunit K from Bdellovibrio bacteriovorus (strain ATCC 15356 / DSM 50701 / NCIMB 9529 / HD100).